The sequence spans 535 residues: Glutamate--cysteine ligase (535 aa).

This sequence belongs to the glutamate--cysteine ligase type 1 family. Type 1 subfamily.

It catalyses the reaction L-cysteine + L-glutamate + ATP = gamma-L-glutamyl-L-cysteine + ADP + phosphate + H(+). It participates in sulfur metabolism; glutathione biosynthesis; glutathione from L-cysteine and L-glutamate: step 1/2. This is Glutamate--cysteine ligase from Pseudomonas savastanoi pv. phaseolicola (strain 1448A / Race 6) (Pseudomonas syringae pv. phaseolicola (strain 1448A / Race 6)).